Reading from the N-terminus, the 285-residue chain is ATP synthase subunit a (285 aa).

A run of 6 helical transmembrane segments spans residues 41–61, 102–122, 164–184, 197–217, 226–246, and 252–272; these read TWHVDTLAWSIGLGLIFLWIF, IAPLALTIFVWVFLMNLMDLI, LGVFILMVGFAIKIKGIGGFI, VFVQILLIPFNLLLELIALVS, LFGNLYAGELIFILIGAIGFM, and FVWAVFHILVITLQAFLFMML.

The protein belongs to the ATPase A chain family. As to quaternary structure, F-type ATPases have 2 components, CF(1) - the catalytic core - and CF(0) - the membrane proton channel. CF(1) has five subunits: alpha(3), beta(3), gamma(1), delta(1), epsilon(1). CF(0) has three main subunits: a(1), b(2) and c(9-12). The alpha and beta chains form an alternating ring which encloses part of the gamma chain. CF(1) is attached to CF(0) by a central stalk formed by the gamma and epsilon chains, while a peripheral stalk is formed by the delta and b chains.

The protein resides in the cell inner membrane. Functionally, key component of the proton channel; it plays a direct role in the translocation of protons across the membrane. This chain is ATP synthase subunit a, found in Pseudoalteromonas translucida (strain TAC 125).